A 295-amino-acid polypeptide reads, in one-letter code: Pyridoxal 5'-phosphate synthase subunit PdxS (295 aa).

Residue Asp-25 participates in D-ribose 5-phosphate binding. Catalysis depends on Lys-82, which acts as the Schiff-base intermediate with D-ribose 5-phosphate. Gly-154 provides a ligand contact to D-ribose 5-phosphate. D-glyceraldehyde 3-phosphate is bound at residue Arg-166. D-ribose 5-phosphate is bound by residues Gly-215 and 236 to 237; that span reads GS.

The protein belongs to the PdxS/SNZ family. As to quaternary structure, in the presence of PdxT, forms a dodecamer of heterodimers.

It catalyses the reaction aldehydo-D-ribose 5-phosphate + D-glyceraldehyde 3-phosphate + L-glutamine = pyridoxal 5'-phosphate + L-glutamate + phosphate + 3 H2O + H(+). It functions in the pathway cofactor biosynthesis; pyridoxal 5'-phosphate biosynthesis. Its function is as follows. Catalyzes the formation of pyridoxal 5'-phosphate from ribose 5-phosphate (RBP), glyceraldehyde 3-phosphate (G3P) and ammonia. The ammonia is provided by the PdxT subunit. Can also use ribulose 5-phosphate and dihydroxyacetone phosphate as substrates, resulting from enzyme-catalyzed isomerization of RBP and G3P, respectively. This Staphylococcus haemolyticus (strain JCSC1435) protein is Pyridoxal 5'-phosphate synthase subunit PdxS.